Consider the following 698-residue polypeptide: UvrABC system protein B (698 aa).

Positions 35–210 (ARLQAGEKDI…TFRVRGDTVE (176 aa)) constitute a Helicase ATP-binding domain. 48–55 (GATGTGKS) is an ATP binding site. The short motif at 101–124 (YYDYYQPEAYVPSSDTYIEKDSSI) is the Beta-hairpin element. Positions 438-604 (QIDDLLAEIN…PLRKRIGDIT (167 aa)) constitute a Helicase C-terminal domain. The UVR domain occupies 654–689 (AELIQELTDQMHVAAGELQFEVAARLRDEISDLKKE).

Belongs to the UvrB family. Forms a heterotetramer with UvrA during the search for lesions. Interacts with UvrC in an incision complex.

The protein resides in the cytoplasm. Functionally, the UvrABC repair system catalyzes the recognition and processing of DNA lesions. A damage recognition complex composed of 2 UvrA and 2 UvrB subunits scans DNA for abnormalities. Upon binding of the UvrA(2)B(2) complex to a putative damaged site, the DNA wraps around one UvrB monomer. DNA wrap is dependent on ATP binding by UvrB and probably causes local melting of the DNA helix, facilitating insertion of UvrB beta-hairpin between the DNA strands. Then UvrB probes one DNA strand for the presence of a lesion. If a lesion is found the UvrA subunits dissociate and the UvrB-DNA preincision complex is formed. This complex is subsequently bound by UvrC and the second UvrB is released. If no lesion is found, the DNA wraps around the other UvrB subunit that will check the other stand for damage. This chain is UvrABC system protein B, found in Beutenbergia cavernae (strain ATCC BAA-8 / DSM 12333 / CCUG 43141 / JCM 11478 / NBRC 16432 / NCIMB 13614 / HKI 0122).